Consider the following 377-residue polypeptide: Histidinol-phosphate aminotransferase 2 (377 aa).

The disordered stretch occupies residues 17 to 44 (NLSPYVPGEQPQHDDLCKLNTNENPFPP). Lysine 228 carries the post-translational modification N6-(pyridoxal phosphate)lysine.

This sequence belongs to the class-II pyridoxal-phosphate-dependent aminotransferase family. Histidinol-phosphate aminotransferase subfamily. Homodimer. The cofactor is pyridoxal 5'-phosphate.

It catalyses the reaction L-histidinol phosphate + 2-oxoglutarate = 3-(imidazol-4-yl)-2-oxopropyl phosphate + L-glutamate. It functions in the pathway amino-acid biosynthesis; L-histidine biosynthesis; L-histidine from 5-phospho-alpha-D-ribose 1-diphosphate: step 7/9. The sequence is that of Histidinol-phosphate aminotransferase 2 from Psychrobacter arcticus (strain DSM 17307 / VKM B-2377 / 273-4).